A 206-amino-acid polypeptide reads, in one-letter code: Phosphoribosylglycinamide formyltransferase (206 aa).

13–15 (GTN) contacts N(1)-(5-phospho-beta-D-ribosyl)glycinamide. (6R)-10-formyltetrahydrofolate contacts are provided by residues 99 to 102 (MIIL) and Asn-121. The active-site Proton donor is the His-123. Asp-163 contacts (6R)-10-formyltetrahydrofolate. N(1)-(5-phospho-beta-D-ribosyl)glycinamide is bound at residue Glu-192.

Belongs to the GART family.

It carries out the reaction N(1)-(5-phospho-beta-D-ribosyl)glycinamide + (6R)-10-formyltetrahydrofolate = N(2)-formyl-N(1)-(5-phospho-beta-D-ribosyl)glycinamide + (6S)-5,6,7,8-tetrahydrofolate + H(+). Its pathway is purine metabolism; IMP biosynthesis via de novo pathway; N(2)-formyl-N(1)-(5-phospho-D-ribosyl)glycinamide from N(1)-(5-phospho-D-ribosyl)glycinamide (10-formyl THF route): step 1/1. The polypeptide is Phosphoribosylglycinamide formyltransferase (purN) (Dictyostelium discoideum (Social amoeba)).